A 310-amino-acid chain; its full sequence is Protoheme IX farnesyltransferase 2 (310 aa).

9 helical membrane passes run 25 to 45 (PGII…AAKG), 49 to 69 (LVLM…GCAI), 87 to 107 (RVTV…LALG), 120 to 139 (ALAL…VYSL), 145 to 165 (SVYG…VGYC), 176 to 196 (AILL…IAIF), 220 to 240 (LHIV…PLAG), 242 to 262 (TGIA…AMAL), and 277 to 297 (QVFG…ALDF).

It belongs to the UbiA prenyltransferase family. Protoheme IX farnesyltransferase subfamily.

The protein localises to the cell inner membrane. The enzyme catalyses heme b + (2E,6E)-farnesyl diphosphate + H2O = Fe(II)-heme o + diphosphate. It participates in porphyrin-containing compound metabolism; heme O biosynthesis; heme O from protoheme: step 1/1. Converts heme B (protoheme IX) to heme O by substitution of the vinyl group on carbon 2 of heme B porphyrin ring with a hydroxyethyl farnesyl side group. This is Protoheme IX farnesyltransferase 2 from Shewanella baltica (strain OS185).